A 177-amino-acid polypeptide reads, in one-letter code: Ubiquinol-cytochrome c reductase iron-sulfur subunit (177 aa).

The helical transmembrane segment at 18-38 (MVLTASSVAAIGAVCTLWPLV) threads the bilayer. One can recognise a Rieske domain in the interval 88–175 (ARAVKMSELI…YTFISDKKIR (88 aa)). The [2Fe-2S] cluster site is built by Cys-120, His-122, Cys-139, and His-142. An intrachain disulfide couples Cys-125 to Cys-141.

It belongs to the Rieske iron-sulfur protein family. The main subunits of complex b-c1 are: cytochrome b, cytochrome c1 and the Rieske protein. [2Fe-2S] cluster serves as cofactor.

It localises to the cell membrane. The enzyme catalyses a quinol + 2 Fe(III)-[cytochrome c](out) = a quinone + 2 Fe(II)-[cytochrome c](out) + 2 H(+)(out). Functionally, component of the ubiquinol-cytochrome c reductase complex (complex III or cytochrome b-c1 complex), which is a respiratory chain that generates an electrochemical potential coupled to ATP synthesis. This is Ubiquinol-cytochrome c reductase iron-sulfur subunit (petA) from Rickettsia conorii (strain ATCC VR-613 / Malish 7).